A 303-amino-acid polypeptide reads, in one-letter code: Ribosomal RNA small subunit methyltransferase H (303 aa).

S-adenosyl-L-methionine is bound by residues 36–38, D55, F81, D101, and Q108; that span reads CGH.

Belongs to the methyltransferase superfamily. RsmH family.

The protein resides in the cytoplasm. It catalyses the reaction cytidine(1402) in 16S rRNA + S-adenosyl-L-methionine = N(4)-methylcytidine(1402) in 16S rRNA + S-adenosyl-L-homocysteine + H(+). Its function is as follows. Specifically methylates the N4 position of cytidine in position 1402 (C1402) of 16S rRNA. In Aster yellows witches'-broom phytoplasma (strain AYWB), this protein is Ribosomal RNA small subunit methyltransferase H.